Consider the following 441-residue polypeptide: Adenylyltransferase and sulfurtransferase MOCS3 (441 aa).

ATP-binding positions include Gly-83, Asp-104, 111–115 (TNLHR), Lys-128, and 172–173 (DN). Zn(2+) is bound by residues Cys-213 and Cys-216. The active-site Glycyl thioester intermediate; for adenylyltransferase activity is Cys-230. Residues Cys-288 and Cys-291 each contribute to the Zn(2+) site. The Rhodanese domain occupies 339-439 (AGRDHLLVDV…WTKTIDPNFP (101 aa)). Residue Cys-395 is the Cysteine persulfide intermediate; for sulfurtransferase activity of the active site.

It in the N-terminal section; belongs to the HesA/MoeB/ThiF family. UBA4 subfamily. The cofactor is Zn(2+).

It is found in the cytoplasm. It carries out the reaction [molybdopterin-synthase sulfur-carrier protein]-C-terminal Gly-Gly + ATP + H(+) = [molybdopterin-synthase sulfur-carrier protein]-C-terminal Gly-Gly-AMP + diphosphate. It catalyses the reaction [molybdopterin-synthase sulfur-carrier protein]-C-terminal Gly-Gly-AMP + S-sulfanyl-L-cysteinyl-[cysteine desulfurase] + AH2 = [molybdopterin-synthase sulfur-carrier protein]-C-terminal-Gly-aminoethanethioate + L-cysteinyl-[cysteine desulfurase] + A + AMP + 2 H(+). The protein operates within tRNA modification; 5-methoxycarbonylmethyl-2-thiouridine-tRNA biosynthesis. Its pathway is cofactor biosynthesis; molybdopterin biosynthesis. In terms of biological role, plays a central role in 2-thiolation of mcm(5)S(2)U at tRNA wobble positions of cytosolic tRNA(Lys), tRNA(Glu) and tRNA(Gln). Also essential during biosynthesis of the molybdenum cofactor. Acts by mediating the C-terminal thiocarboxylation of sulfur carriers URM1 and MOCS2A. Its N-terminus first activates URM1 and MOCS2A as acyl-adenylates (-COAMP), then the persulfide sulfur on the catalytic cysteine is transferred to URM1 and MOCS2A to form thiocarboxylation (-COSH) of their C-terminus. The reaction probably involves hydrogen sulfide that is generated from the persulfide intermediate and that acts as a nucleophile towards URM1 and MOCS2A. Subsequently, a transient disulfide bond is formed. Does not use thiosulfate as sulfur donor; NFS1 probably acting as a sulfur donor for thiocarboxylation reactions. The chain is Adenylyltransferase and sulfurtransferase MOCS3 from Anopheles gambiae (African malaria mosquito).